Here is a 277-residue protein sequence, read N- to C-terminus: Small ribosomal subunit protein uS3 (277 aa).

The KH type-2 domain maps to 38–106 (IRRLLATGLE…QVQLNILEVK (69 aa)). Residues 217 to 277 (AGVEAGRGAP…SAPSAETTES (61 aa)) are disordered. Residues 225-235 (APDRPRRERPA) show a composition bias toward basic and acidic residues. Residues 242–261 (SGSSGTTATSTEAGRAAAET) show a composition bias toward low complexity.

The protein belongs to the universal ribosomal protein uS3 family. As to quaternary structure, part of the 30S ribosomal subunit. Forms a tight complex with proteins S10 and S14.

Its function is as follows. Binds the lower part of the 30S subunit head. Binds mRNA in the 70S ribosome, positioning it for translation. The sequence is that of Small ribosomal subunit protein uS3 from Mycobacteroides abscessus (strain ATCC 19977 / DSM 44196 / CCUG 20993 / CIP 104536 / JCM 13569 / NCTC 13031 / TMC 1543 / L948) (Mycobacterium abscessus).